We begin with the raw amino-acid sequence, 341 residues long: DNA-directed RNA polymerase subunit alpha (341 aa).

The tract at residues 1 to 233 (MVREEVAGST…DLFLPFLHAE (233 aa)) is alpha N-terminal domain (alpha-NTD). An alpha C-terminal domain (alpha-CTD) region spans residues 269–341 (IPLNCIFIDQ…IDLLKNKLSF (73 aa)).

This sequence belongs to the RNA polymerase alpha chain family. In terms of assembly, in plastids the minimal PEP RNA polymerase catalytic core is composed of four subunits: alpha, beta, beta', and beta''. When a (nuclear-encoded) sigma factor is associated with the core the holoenzyme is formed, which can initiate transcription.

It localises to the plastid. Its subcellular location is the chloroplast. The enzyme catalyses RNA(n) + a ribonucleoside 5'-triphosphate = RNA(n+1) + diphosphate. In terms of biological role, DNA-dependent RNA polymerase catalyzes the transcription of DNA into RNA using the four ribonucleoside triphosphates as substrates. This Lolium perenne (Perennial ryegrass) protein is DNA-directed RNA polymerase subunit alpha.